Here is a 396-residue protein sequence, read N- to C-terminus: Probable sugar efflux transporter (396 aa).

Transmembrane regions (helical) follow at residues Val-15–Leu-35, Val-50–Leu-70, Leu-81–Phe-101, Val-103–Ala-123, Ala-136–Leu-156, Phe-170–Leu-190, Pro-209–Tyr-229, Phe-246–Gly-266, Ala-275–Ala-295, Ile-299–Met-319, Val-333–Gly-353, and Met-364–Phe-384.

Belongs to the major facilitator superfamily. SotB (TC 2.A.1.2) family.

Its subcellular location is the cell inner membrane. In terms of biological role, involved in the efflux of sugars. The physiological role may be the reduction of the intracellular concentration of toxic sugars or sugar metabolites. The sequence is that of Probable sugar efflux transporter from Escherichia coli O17:K52:H18 (strain UMN026 / ExPEC).